A 96-amino-acid chain; its full sequence is UPF0235 protein YggU (96 aa).

Belongs to the UPF0235 family.

The sequence is that of UPF0235 protein YggU from Escherichia coli O157:H7.